Consider the following 346-residue polypeptide: Holliday junction branch migration complex subunit RuvB (346 aa).

The tract at residues 1–182 (MSEPARLISP…FGIPVRLTFY (182 aa)) is large ATPase domain (RuvB-L). ATP-binding positions include leucine 21, arginine 22, glycine 63, lysine 66, threonine 67, threonine 68, 129–131 (EDY), arginine 172, tyrosine 182, and arginine 219. Threonine 67 provides a ligand contact to Mg(2+). The small ATPAse domain (RuvB-S) stretch occupies residues 183–253 (TVEELELIVR…IADEALTRLL (71 aa)). The tract at residues 256–346 (NVGFDQLDKR…AQFRLFQEDD (91 aa)) is head domain (RuvB-H). DNA-binding residues include arginine 292, arginine 311, and arginine 316.

The protein belongs to the RuvB family. Homohexamer. Forms an RuvA(8)-RuvB(12)-Holliday junction (HJ) complex. HJ DNA is sandwiched between 2 RuvA tetramers; dsDNA enters through RuvA and exits via RuvB. An RuvB hexamer assembles on each DNA strand where it exits the tetramer. Each RuvB hexamer is contacted by two RuvA subunits (via domain III) on 2 adjacent RuvB subunits; this complex drives branch migration. In the full resolvosome a probable DNA-RuvA(4)-RuvB(12)-RuvC(2) complex forms which resolves the HJ.

It is found in the cytoplasm. The catalysed reaction is ATP + H2O = ADP + phosphate + H(+). Its function is as follows. The RuvA-RuvB-RuvC complex processes Holliday junction (HJ) DNA during genetic recombination and DNA repair, while the RuvA-RuvB complex plays an important role in the rescue of blocked DNA replication forks via replication fork reversal (RFR). RuvA specifically binds to HJ cruciform DNA, conferring on it an open structure. The RuvB hexamer acts as an ATP-dependent pump, pulling dsDNA into and through the RuvAB complex. RuvB forms 2 homohexamers on either side of HJ DNA bound by 1 or 2 RuvA tetramers; 4 subunits per hexamer contact DNA at a time. Coordinated motions by a converter formed by DNA-disengaged RuvB subunits stimulates ATP hydrolysis and nucleotide exchange. Immobilization of the converter enables RuvB to convert the ATP-contained energy into a lever motion, pulling 2 nucleotides of DNA out of the RuvA tetramer per ATP hydrolyzed, thus driving DNA branch migration. The RuvB motors rotate together with the DNA substrate, which together with the progressing nucleotide cycle form the mechanistic basis for DNA recombination by continuous HJ branch migration. Branch migration allows RuvC to scan DNA until it finds its consensus sequence, where it cleaves and resolves cruciform DNA. The protein is Holliday junction branch migration complex subunit RuvB of Rhizobium etli (strain ATCC 51251 / DSM 11541 / JCM 21823 / NBRC 15573 / CFN 42).